The chain runs to 256 residues: 5'-nucleotidase SurE (256 aa).

D8, D9, S42, and N94 together coordinate a divalent metal cation.

It belongs to the SurE nucleotidase family. Requires a divalent metal cation as cofactor.

The protein resides in the cytoplasm. It catalyses the reaction a ribonucleoside 5'-phosphate + H2O = a ribonucleoside + phosphate. Nucleotidase that shows phosphatase activity on nucleoside 5'-monophosphates. This chain is 5'-nucleotidase SurE, found in Ehrlichia chaffeensis (strain ATCC CRL-10679 / Arkansas).